The primary structure comprises 171 residues: Adenine phosphoribosyltransferase (171 aa).

Belongs to the purine/pyrimidine phosphoribosyltransferase family. Homodimer.

The protein resides in the cytoplasm. The enzyme catalyses AMP + diphosphate = 5-phospho-alpha-D-ribose 1-diphosphate + adenine. It functions in the pathway purine metabolism; AMP biosynthesis via salvage pathway; AMP from adenine: step 1/1. Catalyzes a salvage reaction resulting in the formation of AMP, that is energically less costly than de novo synthesis. The sequence is that of Adenine phosphoribosyltransferase from Nitrosococcus oceani (strain ATCC 19707 / BCRC 17464 / JCM 30415 / NCIMB 11848 / C-107).